The primary structure comprises 170 residues: Crossover junction endodeoxyribonuclease RuvC (170 aa).

Active-site residues include Asp-11, Glu-71, and Asp-143. Mg(2+) is bound by residues Asp-11, Glu-71, and Asp-143.

It belongs to the RuvC family. As to quaternary structure, homodimer which binds Holliday junction (HJ) DNA. The HJ becomes 2-fold symmetrical on binding to RuvC with unstacked arms; it has a different conformation from HJ DNA in complex with RuvA. In the full resolvosome a probable DNA-RuvA(4)-RuvB(12)-RuvC(2) complex forms which resolves the HJ. Requires Mg(2+) as cofactor.

It is found in the cytoplasm. It carries out the reaction Endonucleolytic cleavage at a junction such as a reciprocal single-stranded crossover between two homologous DNA duplexes (Holliday junction).. Functionally, the RuvA-RuvB-RuvC complex processes Holliday junction (HJ) DNA during genetic recombination and DNA repair. Endonuclease that resolves HJ intermediates. Cleaves cruciform DNA by making single-stranded nicks across the HJ at symmetrical positions within the homologous arms, yielding a 5'-phosphate and a 3'-hydroxyl group; requires a central core of homology in the junction. The consensus cleavage sequence is 5'-(A/T)TT(C/G)-3'. Cleavage occurs on the 3'-side of the TT dinucleotide at the point of strand exchange. HJ branch migration catalyzed by RuvA-RuvB allows RuvC to scan DNA until it finds its consensus sequence, where it cleaves and resolves the cruciform DNA. The chain is Crossover junction endodeoxyribonuclease RuvC from Rhizobium rhizogenes (strain K84 / ATCC BAA-868) (Agrobacterium radiobacter).